The following is an 86-amino-acid chain: uncharacterized protein (86 aa).

To M.jannaschii MJ0526.1.

This is an uncharacterized protein from Methanothermobacter thermautotrophicus (strain ATCC 29096 / DSM 1053 / JCM 10044 / NBRC 100330 / Delta H) (Methanobacterium thermoautotrophicum).